The chain runs to 720 residues: Transcriptional regulator EFH1 (720 aa).

2 stretches are compositionally biased toward polar residues: residues 1 to 15 and 22 to 35; these read MNGI…NFYN and PSSS…SSQD. 4 disordered regions span residues 1 to 111, 181 to 223, 245 to 336, and 365 to 437; these read MNGI…SSST, SFQM…HQSQ, QKEF…TIAT, and YQRQ…PQPD. The span at 71–105 shows a compositional bias: low complexity; it reads QQNQSESQQSRQSHHLQQQQQQQQQQQQNQHNQQN. Polar residues predominate over residues 181–200; sequence SFQMGSVSTPDTQNSSIRSK. Residues 201–223 show a composition bias toward low complexity; that stretch reads QQQQHSYQQQQPQQLSQSQHQSQ. Residues 254-266 show a composition bias toward polar residues; that stretch reads GDQTLVPQTNSKL. A compositionally biased stretch (low complexity) spans 267 to 304; it reads QQQISETSYSQQQQQQQSPPTPQKQQQQQHYQHQTTQP. Over residues 313–336 the composition is skewed to polar residues; sequence YSQTGGPSSSPVAGNISIPTTIAT. A compositionally biased stretch (low complexity) spans 366-399; that stretch reads QRQQQQQQQHQQPQSQQMSQISQLSQQIPPQGSS. Over residues 400–413 the composition is skewed to polar residues; it reads KNISINSTPTKSRA. A compositionally biased stretch (low complexity) spans 414–433; that stretch reads SSITTRSGRQSRSTSISSFI. Residues 446 to 552 enclose the HTH APSES-type domain; that stretch reads KVATTRWDDE…KNIKQYFLTK (107 aa). Residues 480–501 constitute a DNA-binding region (H-T-H motif); that stretch reads GTKLLNVIGMTRGKRDGILKTE. Residues 569–582 are compositionally biased toward basic and acidic residues; the sequence is GMTRQREEVRREGR. The tract at residues 569–662 is disordered; sequence GMTRQREEVR…KNSESKLLET (94 aa). Residues 613–644 are compositionally biased toward acidic residues; the sequence is VPGDDEEEEDDDDDDDDDEEEGEQDDEEEEDG. Residues 645–654 show a composition bias toward low complexity; the sequence is SSTSMSSSKN.

The protein belongs to the EFG1/PHD1/stuA family.

It localises to the nucleus. In terms of biological role, transcription factor that regulates filamentous growth through repression of EFG1. Regulates the level of colonizing fungi, favoring commensalism as opposed to candidiasis. This is Transcriptional regulator EFH1 (EFH1) from Candida albicans (strain SC5314 / ATCC MYA-2876) (Yeast).